Here is a 57-residue protein sequence, read N- to C-terminus: Potassium channel toxin MeuTXKalpha2 (57 aa).

The N-terminal stretch at 1–19 is a signal peptide; sequence MSRLYAIILIALVFNVIMT. Residues 20 to 28 constitute a propeptide that is removed on maturation; it reads IMPDMKVEA. 3 cysteine pairs are disulfide-bonded: cysteine 31/cysteine 47, cysteine 34/cysteine 52, and cysteine 38/cysteine 54.

This sequence belongs to the short scorpion toxin superfamily. Potassium channel inhibitor family. Alpha-KTx 08 subfamily. Expressed by the venom gland.

The protein resides in the secreted. Functionally, inhibits Kv1.1/KCNA1, Kv1.3/KCNA3 and Shaker potassium channels. The protein is Potassium channel toxin MeuTXKalpha2 of Mesobuthus eupeus (Lesser Asian scorpion).